Reading from the N-terminus, the 397-residue chain is 2-deoxy-scyllo-inosose synthase (397 aa).

Residues D41, 71-74 (EPYK), 103-107 (GVIGN), 127-128 (TS), 138-140 (SLK), and 149-150 (KN) contribute to the NAD(+) site. Residue K140 is part of the active site. E182 contributes to the Co(2+) binding site. E242 is a catalytic residue. Residues H245 and H261 each coordinate Co(2+).

The protein belongs to the sugar phosphate cyclases superfamily. DOI synthase family. NAD(+) is required as a cofactor. The cofactor is Co(2+).

It carries out the reaction D-glucose 6-phosphate = 2-deoxy-L-scyllo-inosose + phosphate. It participates in metabolic intermediate biosynthesis; 2-deoxystreptamine biosynthesis; 2-deoxystreptamine from D-glucose 6-phosphate: step 1/4. Its pathway is antibiotic biosynthesis; gentamicin biosynthesis. In terms of biological role, catalyzes the intramolecular carbocycle formation from D-glucose-6-phosphate to 2-deoxy-scyllo-inosose (DOI). In Micromonospora echinospora (Micromonospora purpurea), this protein is 2-deoxy-scyllo-inosose synthase (gtmA).